The following is a 138-amino-acid chain: MATVEVEQVTPVAVENVEVPTKTVEETVVETEVTQQPEESVPAVTEQKSEAPIVETNEEVVVEEAEKKDEETEKKTEEKDEKTEVITETPVVEEEEKKAEEVTETPAVVEEEKKTEVVEEKQTEVAAAEEVAVEKAEE.

Residues 31–41 are compositionally biased toward low complexity; sequence TEVTQQPEESV. The interval 31–122 is disordered; the sequence is TEVTQQPEES…KKTEVVEEKQ (92 aa). 6 repeat units span residues 62–68, 71–75, 92–98, 109–114, 118–122, and 131–135. Positions 62–135 are 6 X 5 AA approximate repeats of V-E-E-K-K; that stretch reads VEEAEKKDEE…AAAEEVAVEK (74 aa). Residues 64 to 85 show a composition bias toward basic and acidic residues; that stretch reads EAEKKDEETEKKTEEKDEKTEV. Positions 110–122 are enriched in basic and acidic residues; it reads EEEKKTEVVEEKQ.

As to expression, predominantly expressed in roots (e.g. in endodermis in the stele) and stems, to a lower extent in shoots, flowers and siliques, and, at low levels, in leaves.

The protein localises to the cytoplasm. Its subcellular location is the cytosol. Functionally, binds calcium Ca(2+) and may act as a signal mediator to buffer Ca(2+). In Arabidopsis thaliana (Mouse-ear cress), this protein is Cytosolic calcium-binding protein 2.